Here is a 270-residue protein sequence, read N- to C-terminus: Glutamate racemase (270 aa).

Substrate-binding positions include 7–8 and 39–40; these read DS and YG. Cys70 acts as the Proton donor/acceptor in catalysis. 71-72 is a binding site for substrate; it reads NT. Catalysis depends on Cys194, which acts as the Proton donor/acceptor. 195–196 serves as a coordination point for substrate; the sequence is TH.

It belongs to the aspartate/glutamate racemases family.

The catalysed reaction is L-glutamate = D-glutamate. Its pathway is cell wall biogenesis; peptidoglycan biosynthesis. Functionally, provides the (R)-glutamate required for cell wall biosynthesis. The protein is Glutamate racemase of Paracoccus denitrificans (strain Pd 1222).